A 105-amino-acid chain; its full sequence is Integration host factor (105 aa).

The short motif at 64 to 71 (LPKVGKVK) is the H2TH motif, binds DNA element. Positions 82 to 94 (APTRRLRGLGDRQ) are lid, binds DNA.

The protein belongs to the actinobacterial IHF (aIHF) family. Homodimer in solution. Binds DNA as a monomer.

The protein localises to the cytoplasm. A nucleoid-associated protein (NAP) required for septum formation and normal cell division as well as for DNA segregation. Binds about 135 sites across the chromosome, most of which are genes involved in virulence; most DNA-binding sites are immediately upstream of transcription start sites. When mIHF is depleted most of the genes are down-regulated. Binds supercoiled and linear dsDNA in a concentration-dependent manner, probably non-sequence specifically. Binding compacts DNA, protecting it from degradation. Initial binding to supercoiled DNA opens it fully, followed by bending and compaction. Bends and thus compacts linear DNA. Binds DNA via 2 sites, forms left-handed loops on linear DNA; at low concentrations unwinds larger cosmids (42.6 kb) then collapses and condenses DNA as protein levels rise. Forms mostly left-handed loops on condensing cosmid DNA. This is Integration host factor from Mycobacterium tuberculosis (strain ATCC 25618 / H37Rv).